The chain runs to 257 residues: Aquaporin TIP4-2 (257 aa).

The next 2 helical transmembrane spans lie at 32–52 (LVLTFLFVFTGVSASMAAGAG) and 63–83 (TLAAVAIAHALAAGVLVTAGF). Positions 91–93 (NPA) match the NPA 1 motif. 3 helical membrane-spanning segments follow: residues 107-127 (LRALLYVAAQLLASSLACILL), 150-170 (GLVMEVILTFSLLFVTYAMIL), and 178-198 (TIGPLLTGLIVGANSLAGGNF). The NPA 2 signature appears at 204–206 (NPA). A helical transmembrane segment spans residues 225-245 (WIGPLLGGSLAGFVYESLFMV).

It belongs to the MIP/aquaporin (TC 1.A.8) family. TIP (TC 1.A.8.10) subfamily.

It is found in the vacuole membrane. Aquaporins facilitate the transport of water and small neutral solutes across cell membranes. The polypeptide is Aquaporin TIP4-2 (TIP4-2) (Zea mays (Maize)).